The chain runs to 177 residues: Large ribosomal subunit protein uL6 (177 aa).

It belongs to the universal ribosomal protein uL6 family. Part of the 50S ribosomal subunit.

Functionally, this protein binds to the 23S rRNA, and is important in its secondary structure. It is located near the subunit interface in the base of the L7/L12 stalk, and near the tRNA binding site of the peptidyltransferase center. This is Large ribosomal subunit protein uL6 from Rickettsia peacockii (strain Rustic).